The chain runs to 258 residues: Ribosomal RNA small subunit methyltransferase A (258 aa).

S-adenosyl-L-methionine is bound by residues His-13, Leu-15, Gly-41, Asp-63, Asp-87, and Asn-106.

The protein belongs to the class I-like SAM-binding methyltransferase superfamily. rRNA adenine N(6)-methyltransferase family. RsmA subfamily.

It is found in the cytoplasm. It catalyses the reaction adenosine(1518)/adenosine(1519) in 16S rRNA + 4 S-adenosyl-L-methionine = N(6)-dimethyladenosine(1518)/N(6)-dimethyladenosine(1519) in 16S rRNA + 4 S-adenosyl-L-homocysteine + 4 H(+). Specifically dimethylates two adjacent adenosines (A1518 and A1519) in the loop of a conserved hairpin near the 3'-end of 16S rRNA in the 30S particle. May play a critical role in biogenesis of 30S subunits. In Cytophaga hutchinsonii (strain ATCC 33406 / DSM 1761 / CIP 103989 / NBRC 15051 / NCIMB 9469 / D465), this protein is Ribosomal RNA small subunit methyltransferase A.